A 403-amino-acid polypeptide reads, in one-letter code: Phosphoglycerate kinase (403 aa).

Substrate is bound by residues 21 to 23 (DFN), Arg-36, 59 to 62 (HLGR), Arg-119, and Arg-154. Residues Lys-207, Gly-299, Glu-330, and 357 to 360 (GGDA) contribute to the ATP site.

It belongs to the phosphoglycerate kinase family. In terms of assembly, monomer.

The protein resides in the cytoplasm. It catalyses the reaction (2R)-3-phosphoglycerate + ATP = (2R)-3-phospho-glyceroyl phosphate + ADP. It functions in the pathway carbohydrate degradation; glycolysis; pyruvate from D-glyceraldehyde 3-phosphate: step 2/5. The chain is Phosphoglycerate kinase from Chlamydia abortus (strain DSM 27085 / S26/3) (Chlamydophila abortus).